Here is a 144-residue protein sequence, read N- to C-terminus: Large ribosomal subunit protein uL11 (144 aa).

It belongs to the universal ribosomal protein uL11 family. In terms of assembly, part of the ribosomal stalk of the 50S ribosomal subunit. Interacts with L10 and the large rRNA to form the base of the stalk. L10 forms an elongated spine to which L12 dimers bind in a sequential fashion forming a multimeric L10(L12)X complex. One or more lysine residues are methylated.

Functionally, forms part of the ribosomal stalk which helps the ribosome interact with GTP-bound translation factors. The sequence is that of Large ribosomal subunit protein uL11 from Neisseria gonorrhoeae (strain ATCC 700825 / FA 1090).